The following is a 164-amino-acid chain: Pheromone-binding protein (164 aa).

Residues 1 to 22 (MSIQGQIALALMVNMAVGSVDA) form the signal peptide. Intrachain disulfides connect cysteine 41-cysteine 76, cysteine 72-cysteine 130, and cysteine 119-cysteine 139.

Belongs to the PBP/GOBP family. In terms of assembly, homodimer. In terms of tissue distribution, antenna.

Its function is as follows. This major soluble protein in olfactory sensilla of male moths serves to solubilize the extremely hydrophobic pheromone molecules such as bombykol and to transport pheromone through the aqueous lymph to receptors located on olfactory cilia. The polypeptide is Pheromone-binding protein (Bombyx mori (Silk moth)).